The primary structure comprises 193 residues: UPF0301 protein Bfl251 (193 aa).

It belongs to the UPF0301 (AlgH) family.

The chain is UPF0301 protein Bfl251 from Blochmanniella floridana.